The chain runs to 368 residues: Homoserine dehydrogenase (368 aa).

NAD(+) contacts are provided by Val12, Gly14, and Val15. Val15 is a binding site for NADP(+). Residues Val15, Lys59, Thr95, Ser96, and Lys119 each coordinate NADPH. Thr95 lines the NAD(+) pocket. Thr95 provides a ligand contact to NADP(+). An NADP(+)-binding site is contributed by Lys119. Glu146, Val149, Ala151, and Leu153 together coordinate Na(+). NADP(+) is bound by residues Gly209 and Glu212. Glu212 and Asp223 together coordinate L-homoserine. The active-site Proton donor is Lys227. Gly349 contributes to the NAD(+) binding site. NADP(+) is bound at residue Gly349. Gly349 contacts NADPH.

It belongs to the homoserine dehydrogenase family. A metal cation serves as cofactor.

The catalysed reaction is L-homoserine + NADP(+) = L-aspartate 4-semialdehyde + NADPH + H(+). It catalyses the reaction L-homoserine + NAD(+) = L-aspartate 4-semialdehyde + NADH + H(+). It participates in amino-acid biosynthesis; L-methionine biosynthesis via de novo pathway; L-homoserine from L-aspartate: step 3/3. Its pathway is amino-acid biosynthesis; L-threonine biosynthesis; L-threonine from L-aspartate: step 3/5. In terms of biological role, catalyzes the conversion of L-aspartate-beta-semialdehyde (L-Asa) to L-homoserine (L-Hse), the third step in the biosynthesis of amino acids that derive from aspartate (the aspartate family of amino acids), including methioinine and threonine, the latter of which is a precursor to isoleucine; production of homoserine leads to a branch-point in the pathway as it can either be O-phosphorylated for processing to threonine, or O-acylated for processing to methionine. The protein is Homoserine dehydrogenase of Emericella nidulans (strain FGSC A4 / ATCC 38163 / CBS 112.46 / NRRL 194 / M139) (Aspergillus nidulans).